The following is a 51-amino-acid chain: UPF0181 protein VVA0806 (51 aa).

It belongs to the UPF0181 family.

This chain is UPF0181 protein VVA0806, found in Vibrio vulnificus (strain YJ016).